The following is a 209-amino-acid chain: MIRFITIPDFADYQVILKLMEDYVNKVINDHEPEIIYLVEHSEVYTAGTNYKQEELLNYGDIPVIYTGRGGKFTFHGPGQRVIYPILNLDSPNRYKDLKLYIKMLEEWIINSLNYFGIKAYIIKDKVGIWVKVRKDEFAKIAAIGVRVRKWVTYHGVAINISTDLSKFSGIIPCGLENSLVTSLNQLGIHVEMSEFDKIIQTEFNKIFK.

The region spanning 30–209 (DHEPEIIYLV…IQTEFNKIFK (180 aa)) is the BPL/LPL catalytic domain. Residues 69–76 (RGGKFTFH), 143–145 (AIG), and 156–158 (GVA) each bind substrate. Catalysis depends on Cys-174, which acts as the Acyl-thioester intermediate.

The protein belongs to the LipB family.

The protein resides in the cytoplasm. The enzyme catalyses octanoyl-[ACP] + L-lysyl-[protein] = N(6)-octanoyl-L-lysyl-[protein] + holo-[ACP] + H(+). It participates in protein modification; protein lipoylation via endogenous pathway; protein N(6)-(lipoyl)lysine from octanoyl-[acyl-carrier-protein]: step 1/2. Functionally, catalyzes the transfer of endogenously produced octanoic acid from octanoyl-acyl-carrier-protein onto the lipoyl domains of lipoate-dependent enzymes. Lipoyl-ACP can also act as a substrate although octanoyl-ACP is likely to be the physiological substrate. This is Octanoyltransferase from Rickettsia rickettsii (strain Iowa).